Consider the following 252-residue polypeptide: Isoprenyl transferase (252 aa).

Aspartate 28 is an active-site residue. Aspartate 28 contacts Mg(2+). Residues 29–32, tryptophan 33, arginine 41, histidine 45, and 73–75 contribute to the substrate site; these read GNGR and STE. The Proton acceptor role is filled by asparagine 76. Substrate contacts are provided by residues tryptophan 77, arginine 79, arginine 200, and 206-208; that span reads RLS. Residue glutamate 219 coordinates Mg(2+).

It belongs to the UPP synthase family. As to quaternary structure, homodimer. Mg(2+) serves as cofactor.

Functionally, catalyzes the condensation of isopentenyl diphosphate (IPP) with allylic pyrophosphates generating different type of terpenoids. This chain is Isoprenyl transferase, found in Streptococcus pneumoniae serotype 4 (strain ATCC BAA-334 / TIGR4).